Reading from the N-terminus, the 296-residue chain is Glycine and tyrosine-rich protein (296 aa).

The signal sequence occupies residues 1 to 18 (MKVLVTALIISFSTAVLT). Residues 157-280 (MESRLRPQAT…NQPEETPAPN (124 aa)) form a disordered region. Low complexity predominate over residues 172-264 (TGGQPSTGGK…STGGQPSTGG (93 aa)).

Component of the acid-insoluble and acid-soluble organic matrix of calcified layers of the shell (at protein level).

The protein localises to the secreted. In Lottia gigantea (Giant owl limpet), this protein is Glycine and tyrosine-rich protein.